Reading from the N-terminus, the 95-residue chain is Acyl carrier protein (95 aa).

Residues 4-79 (KEIFERIEQV…HVMELTLDLV (76 aa)) enclose the Carrier domain. An O-(pantetheine 4'-phosphoryl)serine modification is found at S39.

This sequence belongs to the acyl carrier protein (ACP) family. Post-translationally, 4'-phosphopantetheine is transferred from CoA to a specific serine of apo-ACP by AcpS. This modification is essential for activity because fatty acids are bound in thioester linkage to the sulfhydryl of the prosthetic group.

Its subcellular location is the cytoplasm. It functions in the pathway lipid metabolism; fatty acid biosynthesis. Its function is as follows. Carrier of the growing fatty acid chain in fatty acid biosynthesis. In Saccharopolyspora erythraea (strain ATCC 11635 / DSM 40517 / JCM 4748 / NBRC 13426 / NCIMB 8594 / NRRL 2338), this protein is Acyl carrier protein.